The sequence spans 380 residues: MAPNLRKSHPLLKLINNSLIDLPTPSNISAWWNFGSLLGICLLTQILTGLLLATHYTADTTLAFSSVAHTCRNVQYGWLIRNLHANGASFFFICIYLHIGRGFYYGSYLNKETWNTGVILLLALMATAFVGYVLPWGQMSFWGATVITNLFSAIPYIGQTLVEWAWGGFSVDNPTLTRFFALHFLLPFMIAGLAFIHLTFLHESGSNNPLGILSNCDKIPFHPYFSLKDILGFIIMFLPLTTLALFSPNLLGDPENFTPANPLVTPPHIKPEWYFLFAYAILRSIPNKLGGVLALAASVLVLFLTPLLHKSKQRAMTFRPLSQLLFWTLVANLLILTWVGSQPVEHPFIIIGQLASLAYFTILLLLFPIVGALENKMLNY.

4 helical membrane-spanning segments follow: residues Phe34–Thr54, Trp78–Ile99, Trp114–Leu134, and Phe179–Thr199. Residues His84 and His98 each coordinate heme b. Positions 183 and 197 each coordinate heme b. Position 202 (His202) interacts with a ubiquinone. The next 4 helical transmembrane spans lie at Leu227 to Ser247, Leu289 to His309, Leu321 to Ser341, and Phe348 to Pro368.

Belongs to the cytochrome b family. As to quaternary structure, the cytochrome bc1 complex contains 11 subunits: 3 respiratory subunits (MT-CYB, CYC1 and UQCRFS1), 2 core proteins (UQCRC1 and UQCRC2) and 6 low-molecular weight proteins (UQCRH/QCR6, UQCRB/QCR7, UQCRQ/QCR8, UQCR10/QCR9, UQCR11/QCR10 and a cleavage product of UQCRFS1). This cytochrome bc1 complex then forms a dimer. It depends on heme b as a cofactor.

The protein localises to the mitochondrion inner membrane. In terms of biological role, component of the ubiquinol-cytochrome c reductase complex (complex III or cytochrome b-c1 complex) that is part of the mitochondrial respiratory chain. The b-c1 complex mediates electron transfer from ubiquinol to cytochrome c. Contributes to the generation of a proton gradient across the mitochondrial membrane that is then used for ATP synthesis. The protein is Cytochrome b (MT-CYB) of Uria lomvia (Thick-billed murre).